The primary structure comprises 1099 residues: Protein transport protein Sec24A (1099 aa).

Disordered stretches follow at residues 1–36, 65–139, and 279–317; these read MSQP…GPVQ, KTLN…LPGA, and SQPT…AGLP. 5 stretches are compositionally biased toward polar residues: residues 10 to 20, 68 to 90, 108 to 126, 279 to 292, and 303 to 317; these read GGSSTGLQAQN, NPVS…NYQG, SLHS…QNPA, SQPT…SRSV, and YQNT…AGLP. 4 residues coordinate Zn(2+): Cys-437, Cys-440, Cys-458, and Cys-461. The tract at residues 437 to 461 is zinc finger-like; that stretch reads CRSCRTYINPFVSFLDQRRWKCNLC. Residues 972–1044 form a Gelsolin-like repeat; the sequence is PQPPILQLSV…TPESARTIAF (73 aa).

This sequence belongs to the SEC23/SEC24 family. SEC24 subfamily. In terms of assembly, COPII is composed of at least five proteins: the Sec23/24 complex, the Sec13/31 complex and Sar1. Interacts with TMED2. Interacts (as part of the Sec23/24 complex) with SEC22B; recruits SEC22B into COPII-coated vesicles for its transport from the endoplasmic reticulum to the Golgi. Interacts with STING1; promoting STING1 translocation to COPII vesicles in a STEEP1-dependent manner. Interacts with TMEM39A. Interacts with SACM1L; this interaction is reduced in the absence of TMEM39A. Interacts with kinase FAM20C; transport of FAM20C from the endoplasmic reticulum to the Golgi is likely to be mediated by COPII vesicles.

The protein localises to the cytoplasmic vesicle. It localises to the COPII-coated vesicle membrane. Its subcellular location is the endoplasmic reticulum membrane. It is found in the cytoplasm. The protein resides in the cytosol. Component of the coat protein complex II (COPII) which promotes the formation of transport vesicles from the endoplasmic reticulum (ER). The coat has two main functions, the physical deformation of the endoplasmic reticulum membrane into vesicles and the selection of cargo molecules for their transport to the Golgi complex. Plays a central role in cargo selection within the COPII complex and together with SEC24B may have a different specificity compared to SEC24C and SEC24D. May package preferentially cargos with cytoplasmic DxE or LxxLE motifs and may also recognize conformational epitopes. The polypeptide is Protein transport protein Sec24A (Bos taurus (Bovine)).